The sequence spans 82 residues: UPF0298 protein SPCG_0698 (82 aa).

This sequence belongs to the UPF0298 family.

It is found in the cytoplasm. The chain is UPF0298 protein SPCG_0698 from Streptococcus pneumoniae (strain CGSP14).